A 450-amino-acid polypeptide reads, in one-letter code: Glucose-6-phosphate isomerase (450 aa).

E290 functions as the Proton donor in the catalytic mechanism. Residues H311 and K425 contribute to the active site.

The protein belongs to the GPI family.

It is found in the cytoplasm. The enzyme catalyses alpha-D-glucose 6-phosphate = beta-D-fructose 6-phosphate. It functions in the pathway carbohydrate biosynthesis; gluconeogenesis. Its pathway is carbohydrate degradation; glycolysis; D-glyceraldehyde 3-phosphate and glycerone phosphate from D-glucose: step 2/4. Catalyzes the reversible isomerization of glucose-6-phosphate to fructose-6-phosphate. The protein is Glucose-6-phosphate isomerase of Leuconostoc mesenteroides subsp. mesenteroides (strain ATCC 8293 / DSM 20343 / BCRC 11652 / CCM 1803 / JCM 6124 / NCDO 523 / NBRC 100496 / NCIMB 8023 / NCTC 12954 / NRRL B-1118 / 37Y).